The chain runs to 124 residues: Alpha-endosulfine (124 aa).

A Phosphoserine; by GWL modification is found at S74. A disordered region spans residues 99–124 (VTGDHIPTPQDLPQRKNTILTSKLAG). Residues 113–124 (RKNTILTSKLAG) show a composition bias toward polar residues.

Belongs to the endosulfine family. Post-translationally, phosphorylation at Ser-74 by gwl during mitosis is essential for interaction with ppp2r2d (PR55-delta) and subsequent inactivation of PP2A.

The protein resides in the cytoplasm. Protein phosphatase inhibitor that specifically inhibits protein phosphatase 2A (PP2A) during mitosis. When phosphorylated at Ser-67 during mitosis, specifically interacts with ppp2r2d (PR55-delta) and inhibits its activity, leading to inactivation of PP2A, an essential condition to keep cyclin-B1-CDK1 activity high during M phase. The polypeptide is Alpha-endosulfine (ensa) (Danio rerio (Zebrafish)).